The primary structure comprises 489 residues: Argininosuccinate lyase (489 aa).

Residues 462 to 489 (QARYQQTEPAEEPPLPPSSPGSGLPLES) form a disordered region.

This sequence belongs to the lyase 1 family. Argininosuccinate lyase subfamily.

It localises to the cytoplasm. It carries out the reaction 2-(N(omega)-L-arginino)succinate = fumarate + L-arginine. It participates in amino-acid biosynthesis; L-arginine biosynthesis; L-arginine from L-ornithine and carbamoyl phosphate: step 3/3. The protein is Argininosuccinate lyase of Synechococcus sp. (strain JA-3-3Ab) (Cyanobacteria bacterium Yellowstone A-Prime).